The chain runs to 126 residues: Fatty acid-binding protein 10-A, liver basic (126 aa).

Cholate-binding residues include lysine 57, lysine 77, histidine 99, and glutamine 101.

The protein belongs to the calycin superfamily. Fatty-acid binding protein (FABP) family. Expressed in the developing embryonic liver from 48 hpf. Also expressed in the liver of 5-day-old larvae. In adults, primarily expressed in the liver, with weak expression in the testis and intestine.

Its subcellular location is the cytoplasm. Binds hydrophobic ligands, such as cholate, in the cytoplasm. May be involved in intracellular lipid transport. Binds one cholate per subunit. The sequence is that of Fatty acid-binding protein 10-A, liver basic (fabp10a) from Danio rerio (Zebrafish).